Here is a 144-residue protein sequence, read N- to C-terminus: ATP synthase subunit 9, mitochondrial (144 aa).

Residues 1–63 constitute a mitochondrion transit peptide; that stretch reads MASTRVLASR…ATRQITQKRA (63 aa). 2 helical membrane passes run 83–103 and 120–140; these read TAAI…AALL and AILG…VALM.

Belongs to the ATPase C chain family. As to quaternary structure, F-type ATPases have 2 components, CF(1) - the catalytic core - and CF(0) - the membrane proton channel. CF(1) has five subunits: alpha(3), beta(3), gamma(1), delta(1), epsilon(1). CF(0) has three main subunits: a, b and c.

It localises to the mitochondrion membrane. In terms of biological role, mitochondrial membrane ATP synthase (F(1)F(0) ATP synthase or Complex V) produces ATP from ADP in the presence of a proton gradient across the membrane which is generated by electron transport complexes of the respiratory chain. F-type ATPases consist of two structural domains, F(1) - containing the extramembraneous catalytic core and F(0) - containing the membrane proton channel, linked together by a central stalk and a peripheral stalk. During catalysis, ATP synthesis in the catalytic domain of F(1) is coupled via a rotary mechanism of the central stalk subunits to proton translocation. Part of the complex F(0) domain. A homomeric c-ring of probably 10 subunits is part of the complex rotary element. The protein is ATP synthase subunit 9, mitochondrial (ATP9) of Podospora anserina (Pleurage anserina).